The chain runs to 624 residues: Glucoamylase (624 aa).

The N-terminal stretch at 1 to 18 (MRQFLALAAAASIAVADS) is a signal peptide. Residues 26-132 (NSPPDDKAVA…NSQQLNVQVE (107 aa)) enclose the CBM21 domain. N-linked (GlcNAc...) asparagine glycans are attached at residues N54, N70, N98, N111, N168, N267, and N333. Residue D340 is the Proton acceptor of the active site. Catalysis depends on E343, which acts as the Proton donor. 2 N-linked (GlcNAc...) asparagine glycosylation sites follow: N460 and N582.

The protein belongs to the glycosyl hydrolase 15 family.

The enzyme catalyses Hydrolysis of terminal (1-&gt;4)-linked alpha-D-glucose residues successively from non-reducing ends of the chains with release of beta-D-glucose.. This is Glucoamylase (GAA) from Blastobotrys adeninivorans (Yeast).